A 176-amino-acid chain; its full sequence is Ribosome rescue factor SmrB (176 aa).

The Smr domain occupies 93-168 (LDLHGYRQSE…GDAALLVLID (76 aa)).

The protein belongs to the SmrB family. As to quaternary structure, associates with collided ribosomes, but not with correctly translating polysomes.

Acts as a ribosome collision sensor. Detects stalled/collided disomes (pairs of ribosomes where the leading ribosome is stalled and a second ribosome has collided with it) and endonucleolytically cleaves mRNA at the 5' boundary of the stalled ribosome. Stalled/collided disomes form a new interface (primarily via the 30S subunits) that binds SmrB. Cleaved mRNA becomes available for tmRNA ligation, leading to ribosomal subunit dissociation and rescue of stalled ribosomes. This Shewanella putrefaciens (strain CN-32 / ATCC BAA-453) protein is Ribosome rescue factor SmrB.